The primary structure comprises 294 residues: Lipoyl synthase (294 aa).

Residues C38, C43, C49, C64, C68, C71, and S277 each contribute to the [4Fe-4S] cluster site. One can recognise a Radical SAM core domain in the interval 50 to 266 (WSRGTATFLL…RSFAEGAGFR (217 aa)).

It belongs to the radical SAM superfamily. Lipoyl synthase family. [4Fe-4S] cluster serves as cofactor.

The protein resides in the cytoplasm. The enzyme catalyses [[Fe-S] cluster scaffold protein carrying a second [4Fe-4S](2+) cluster] + N(6)-octanoyl-L-lysyl-[protein] + 2 oxidized [2Fe-2S]-[ferredoxin] + 2 S-adenosyl-L-methionine + 4 H(+) = [[Fe-S] cluster scaffold protein] + N(6)-[(R)-dihydrolipoyl]-L-lysyl-[protein] + 4 Fe(3+) + 2 hydrogen sulfide + 2 5'-deoxyadenosine + 2 L-methionine + 2 reduced [2Fe-2S]-[ferredoxin]. It participates in protein modification; protein lipoylation via endogenous pathway; protein N(6)-(lipoyl)lysine from octanoyl-[acyl-carrier-protein]: step 2/2. Functionally, catalyzes the radical-mediated insertion of two sulfur atoms into the C-6 and C-8 positions of the octanoyl moiety bound to the lipoyl domains of lipoate-dependent enzymes, thereby converting the octanoylated domains into lipoylated derivatives. In Pelodictyon phaeoclathratiforme (strain DSM 5477 / BU-1), this protein is Lipoyl synthase.